A 139-amino-acid polypeptide reads, in one-letter code: Transcription antitermination protein NusB (139 aa).

This sequence belongs to the NusB family.

Involved in transcription antitermination. Required for transcription of ribosomal RNA (rRNA) genes. Binds specifically to the boxA antiterminator sequence of the ribosomal RNA (rrn) operons. The protein is Transcription antitermination protein NusB of Idiomarina loihiensis (strain ATCC BAA-735 / DSM 15497 / L2-TR).